We begin with the raw amino-acid sequence, 215 residues long: Histone H1.1 (215 aa).

The tract at residues 1–43 (MSETVPPAPAASAAPEKPLAGKKAKKPAKAAAASKKKPAGPSV) is disordered. N-acetylserine is present on Ser-2. 2 positions are modified to phosphoserine: Ser-2 and Ser-12. Lys-17 carries the N6-acetyllysine modification. Residues 20–38 (AGKKAKKPAKAAAASKKKP) are compositionally biased toward basic residues. An N6-(beta-hydroxybutyryl)lysine modification is found at Lys-37. Positions 39 to 112 (AGPSVSELIV…GASGSFKLNK (74 aa)) constitute an H15 domain. Ser-44 is modified (phosphoserine). Lys-55 is modified (N6-(beta-hydroxybutyryl)lysine). Arg-57 carries the citrulline modification. At Lys-67 the chain carries N6-(beta-hydroxybutyryl)lysine. Lys-78 is subject to N6-acetyllysine. Residue Lys-88 is modified to N6-(beta-hydroxybutyryl)lysine. Lys-93 bears the N6-(beta-hydroxybutyryl)lysine; alternate mark. An N6-acetyllysine; alternate modification is found at Lys-93. The tract at residues 94–215 (GTLVQTKGTG…KPKKAAPKKK (122 aa)) is disordered. A Phosphoserine modification is found at Ser-107. Lys-109 bears the N6-(beta-hydroxybutyryl)lysine mark. Residues 122 to 147 (GASKVATKTKATGASKKLKKATGASK) show a composition bias toward low complexity. Lys-125 is modified (N6-acetyllysine). Composition is skewed to basic residues over residues 148–181 (KSVK…KKVA) and 188–215 (KAVK…PKKK). Thr-204 carries the post-translational modification Phosphothreonine.

This sequence belongs to the histone H1/H5 family. As to quaternary structure, interacts with DFFB. H1 histones are progressively phosphorylated during the cell cycle, becoming maximally phosphorylated during late G2 phase and M phase, and being dephosphorylated sharply thereafter. Post-translationally, citrullination at Arg-57 (H1R54ci) by PADI4 takes place within the DNA-binding site of H1 and results in its displacement from chromatin and global chromatin decondensation, thereby promoting pluripotency and stem cell maintenance.

Its subcellular location is the nucleus. It localises to the chromosome. Its function is as follows. Histone H1 protein binds to linker DNA between nucleosomes forming the macromolecular structure known as the chromatin fiber. Histones H1 are necessary for the condensation of nucleosome chains into higher-order structured fibers. Also acts as a regulator of individual gene transcription through chromatin remodeling, nucleosome spacing and DNA methylation. The chain is Histone H1.1 from Homo sapiens (Human).